Consider the following 302-residue polypeptide: RuBisCO operon transcriptional regulator (302 aa).

In terms of domain architecture, HTH lysR-type spans 1–60 (MHVSLRQLRVFEAVARHNSYTRAAEELHLSQPAVSMQVRQLEDEIGLSLFERLGKQVVLT). The segment at residues 20 to 39 (YTRAAEELHLSQPAVSMQVR) is a DNA-binding region (H-T-H motif).

It belongs to the LysR transcriptional regulatory family.

Functionally, trans-acting transcriptional regulator of RuBisCO genes (rbcAB) expression. This chain is RuBisCO operon transcriptional regulator (rbcR), found in Allochromatium vinosum (Chromatium vinosum).